Reading from the N-terminus, the 178-residue chain is Phosphopantetheine adenylyltransferase (178 aa).

Threonine 17 lines the substrate pocket. ATP-binding positions include 17–18 (TF) and histidine 25. Substrate is bound by residues lysine 49, leucine 86, and arginine 100. ATP contacts are provided by residues 101-103 (GLR), glutamate 111, and 136-142 (LQPVASR).

Belongs to the bacterial CoaD family. Homohexamer. Requires Mg(2+) as cofactor.

Its subcellular location is the cytoplasm. It carries out the reaction (R)-4'-phosphopantetheine + ATP + H(+) = 3'-dephospho-CoA + diphosphate. Its pathway is cofactor biosynthesis; coenzyme A biosynthesis; CoA from (R)-pantothenate: step 4/5. In terms of biological role, reversibly transfers an adenylyl group from ATP to 4'-phosphopantetheine, yielding dephospho-CoA (dPCoA) and pyrophosphate. This is Phosphopantetheine adenylyltransferase from Zymomonas mobilis subsp. mobilis (strain ATCC 31821 / ZM4 / CP4).